A 221-amino-acid polypeptide reads, in one-letter code: Uracil-DNA glycosylase (221 aa).

Asp63 acts as the Proton acceptor in catalysis.

This sequence belongs to the uracil-DNA glycosylase (UDG) superfamily. UNG family.

It localises to the cytoplasm. The catalysed reaction is Hydrolyzes single-stranded DNA or mismatched double-stranded DNA and polynucleotides, releasing free uracil.. Its function is as follows. Excises uracil residues from the DNA which can arise as a result of misincorporation of dUMP residues by DNA polymerase or due to deamination of cytosine. The chain is Uracil-DNA glycosylase from Blochmanniella floridana.